An 812-amino-acid polypeptide reads, in one-letter code: Protein FAM83G (812 aa).

A2 is subject to N-acetylalanine. Residues 2–312 (AFSQVQCLDD…LYLMSQSVSL (311 aa)) are DUF1669. S4 is subject to Phosphoserine. The disordered stretch occupies residues 76–119 (PGSEDPRVSGRRPEPQDNGGADASEETSAAGGPPATETLPSLEY). Residues 79–90 (EDPRVSGRRPEP) are compositionally biased toward basic and acidic residues. Residues S124, S127, and S356 each carry the phosphoserine modification. 3 disordered regions span residues 362–389 (KSSS…GDLS), 455–509 (ASAQ…KPRT), and 521–812 (SDIG…HKEP). Positions 455–467 (ASAQHQLWKQSQG) are enriched in polar residues. A compositionally biased stretch (pro residues) spans 471-480 (CPAPCPPPAP). Positions 545-562 (STASESEVPQQQHSSMTQ) are enriched in polar residues. Residues 576 to 586 (LDEDEDDDDDY) are compositionally biased toward acidic residues. A compositionally biased stretch (low complexity) spans 589 to 598 (LSDQDSLSGS). Phosphoserine is present on residues S609, S613, S615, and S649. A compositionally biased stretch (low complexity) spans 721–731 (SSSKKASPAAA). A compositionally biased stretch (basic and acidic residues) spans 761–772 (LRAELRATEEHA).

Belongs to the FAM83 family. In terms of assembly, interacts with SMAD1 (via MH2 domain); in a SMAD4-independent manner. Directly interacts (via DUF1669) with casein kinase isoforms CSNK1A1 and CSNK1A1L. BMP signaling induces the phosphorylation by BMPR1A at Ser-609, Ser-613 and Ser-615. Phosphorylation at Ser-609 is necessary for the activation of SMAD4-independent BMP target genes such as NEDD9 and ASNS. In terms of processing, phosphorylated by CSNK1A1.

The protein localises to the cytoplasm. It is found in the cytosol. It localises to the nucleus. Substrate for type I BMP receptor kinase involved in regulation of some target genes of the BMP signaling pathway. Also regulates the expression of several non-BMP target genes, suggesting a role in other signaling pathways. The chain is Protein FAM83G (Fam83g) from Mus musculus (Mouse).